We begin with the raw amino-acid sequence, 300 residues long: Probable ABC transporter permease protein YurM (300 aa).

Transmembrane regions (helical) follow at residues 37–57, 98–118, 129–149, 161–181, 204–224, and 264–284; these read VWVF…WMVM, VIVT…AAYG, FFLV…LVPL, TYWA…IILI, FGVF…TSGI, and WGVL…LFLL. The ABC transmembrane type-1 domain maps to 94–285; the sequence is FMNSVIVTAL…APIIILFLLM (192 aa).

This sequence belongs to the binding-protein-dependent transport system permease family. MalFG subfamily.

It is found in the cell membrane. In terms of biological role, probably part of the binding-protein-dependent transport system YurMNO. Probably responsible for the translocation of the substrate across the membrane. In Bacillus subtilis (strain 168), this protein is Probable ABC transporter permease protein YurM (yurM).